The primary structure comprises 188 residues: Protein SSX1 (188 aa).

Disordered stretches follow at residues 1–22 (MNGD…EKRS) and 111–188 (IMPK…EDDE). In terms of domain architecture, KRAB-related spans 20–83 (KRSKAFDDIA…KQATDFQGND (64 aa)). A compositionally biased stretch (basic and acidic residues) spans 115-125 (KPAEDENDSKG). A Phosphoserine modification is found at serine 123. A compositionally biased stretch (basic residues) spans 153–170 (KRSGPKRGKHAWTHRLRE). Acidic residues predominate over residues 179–188 (EISDPEEDDE).

It belongs to the SSX family. As to expression, expressed at high level in the testis. Expressed at low level in thyroid. Not detected in tonsil, colon, lung, spleen, prostate, kidney, striated and smooth muscles. Detected in rhabdomyosarcoma and fibrosarcoma cell lines. Not detected in mesenchymal and epithelial cell lines. Expressed in testis.

It is found in the cytoplasm. Its subcellular location is the cytoskeleton. The protein localises to the flagellum axoneme. Functionally, could act as a modulator of transcription. Plays a role in spermatogenesis. This is Protein SSX1 (SSX1) from Homo sapiens (Human).